We begin with the raw amino-acid sequence, 554 residues long: Thermosome subunit beta (554 aa).

The tract at residues 532 to 554 (GKKSGSEPSGKKEKDKEEKSSED) is disordered. The segment covering 540-554 (SGKKEKDKEEKSSED) has biased composition (basic and acidic residues).

This sequence belongs to the TCP-1 chaperonin family. In terms of assembly, forms a Heterooligomeric complex of two stacked eight-membered rings.

Molecular chaperone; binds unfolded polypeptides in vitro, and has a weak ATPase activity. This Saccharolobus solfataricus (strain ATCC 35092 / DSM 1617 / JCM 11322 / P2) (Sulfolobus solfataricus) protein is Thermosome subunit beta (thsB).